We begin with the raw amino-acid sequence, 151 residues long: Small ribosomal subunit protein uS15 (151 aa).

The disordered stretch occupies residues 1-20 (MARLHSGKRGSSGSTRPLRT).

The protein belongs to the universal ribosomal protein uS15 family. As to quaternary structure, part of the 30S ribosomal subunit.

This is Small ribosomal subunit protein uS15 from Methanococcus maripaludis (strain DSM 14266 / JCM 13030 / NBRC 101832 / S2 / LL).